A 651-amino-acid polypeptide reads, in one-letter code: Peptide-N(4)-(N-acetyl-beta-glucosaminyl)asparagine amidase (651 aa).

Position 2 is an N-acetylalanine (Ala2). The PUB domain maps to 30-91; it reads EASKLLLTYA…EGETHLIFPK (62 aa). The interval 116–153 is disordered; the sequence is SSQKVEFSQHPAAVRLPAEQPEDPTGLMQHSGNQPGQP. Over residues 143–152 the composition is skewed to polar residues; sequence MQHSGNQPGQ. Residues Cys247, Cys250, Cys280, and Cys283 each coordinate Zn(2+). The active-site Nucleophile is Cys306. Residues His333 and Asp350 contribute to the active site. Positions 451-651 constitute a PAW domain; sequence ELGGRVSGSL…LEIIITFSDL (201 aa).

The protein belongs to the transglutaminase-like superfamily. PNGase family. Component of a complex required to couple retrotranslocation, ubiquitination and deglycosylation composed of NGLY1, SAKS1, AMFR, VCP and RAD23B. Interacts with the proteasome components RAD23B and PSMC1. Interacts with directly with VCP. Interacts with DERL1, bringing it close to the endoplasmic reticulum membrane. Interacts with SAKS1. Requires Zn(2+) as cofactor.

It localises to the cytoplasm. The enzyme catalyses Hydrolysis of an N(4)-(acetyl-beta-D-glucosaminyl)asparagine residue in which the glucosamine residue may be further glycosylated, to yield a (substituted) N-acetyl-beta-D-glucosaminylamine and a peptide containing an aspartate residue.. With respect to regulation, inhibited by Z-VAD-fmk, a well-known caspase inhibitor, which inhibits enzyme activity through covalent binding of the carbohydrate to the single Cys-306 residue. Its function is as follows. Specifically deglycosylates the denatured form of N-linked glycoproteins in the cytoplasm and assists their proteasome-mediated degradation. Cleaves the beta-aspartyl-glucosamine (GlcNAc) of the glycan and the amide side chain of Asn, converting Asn to Asp. Prefers proteins containing high-mannose over those bearing complex type oligosaccharides. Can recognize misfolded proteins in the endoplasmic reticulum that are exported to the cytosol to be destroyed and deglycosylate them, while it has no activity toward native proteins. Deglycosylation is a prerequisite for subsequent proteasome-mediated degradation of some, but not all, misfolded glycoproteins. This is Peptide-N(4)-(N-acetyl-beta-glucosaminyl)asparagine amidase (Ngly1) from Rattus norvegicus (Rat).